The following is a 373-amino-acid chain: Histidinol-phosphate aminotransferase (373 aa).

Lys230 carries the N6-(pyridoxal phosphate)lysine modification.

Belongs to the class-II pyridoxal-phosphate-dependent aminotransferase family. Histidinol-phosphate aminotransferase subfamily. In terms of assembly, homodimer. It depends on pyridoxal 5'-phosphate as a cofactor.

It carries out the reaction L-histidinol phosphate + 2-oxoglutarate = 3-(imidazol-4-yl)-2-oxopropyl phosphate + L-glutamate. It functions in the pathway amino-acid biosynthesis; L-histidine biosynthesis; L-histidine from 5-phospho-alpha-D-ribose 1-diphosphate: step 7/9. In Synechococcus sp. (strain ATCC 27144 / PCC 6301 / SAUG 1402/1) (Anacystis nidulans), this protein is Histidinol-phosphate aminotransferase.